Consider the following 233-residue polypeptide: 5'-methylthioadenosine/S-adenosylhomocysteine nucleosidase (233 aa).

The Proton acceptor role is filled by Glu12. Residues Gly78, Ile156, and 177-178 (ME) each bind substrate. Asp201 (proton donor) is an active-site residue.

This sequence belongs to the PNP/UDP phosphorylase family. MtnN subfamily.

It carries out the reaction S-adenosyl-L-homocysteine + H2O = S-(5-deoxy-D-ribos-5-yl)-L-homocysteine + adenine. The enzyme catalyses S-methyl-5'-thioadenosine + H2O = 5-(methylsulfanyl)-D-ribose + adenine. It catalyses the reaction 5'-deoxyadenosine + H2O = 5-deoxy-D-ribose + adenine. It participates in amino-acid biosynthesis; L-methionine biosynthesis via salvage pathway; S-methyl-5-thio-alpha-D-ribose 1-phosphate from S-methyl-5'-thioadenosine (hydrolase route): step 1/2. Its function is as follows. Catalyzes the irreversible cleavage of the glycosidic bond in both 5'-methylthioadenosine (MTA) and S-adenosylhomocysteine (SAH/AdoHcy) to adenine and the corresponding thioribose, 5'-methylthioribose and S-ribosylhomocysteine, respectively. Also cleaves 5'-deoxyadenosine, a toxic by-product of radical S-adenosylmethionine (SAM) enzymes, into 5-deoxyribose and adenine. This Listeria monocytogenes serotype 4b (strain CLIP80459) protein is 5'-methylthioadenosine/S-adenosylhomocysteine nucleosidase.